We begin with the raw amino-acid sequence, 769 residues long: Cullin-3 (769 aa).

Residues 614-655 (DRELPSTTSSTTTTTTTATSSSTSTSPSSSSSSISTPTPSKS) form a disordered region. A compositionally biased stretch (low complexity) spans 618–653 (PSTTSSTTTTTTTATSSSTSTSPSSSSSSISTPTPS). The Cullin neddylation domain occupies 699–761 (DRKHQIEASI…REYLERSKQD (63 aa)). Residue K713 forms a Glycyl lysine isopeptide (Lys-Gly) (interchain with G-Cter in NEDD8) linkage.

It belongs to the cullin family. Neddylated. Deneddylated via its interaction with the COP9 signalosome (CSN) complex.

It localises to the nucleus. The protein operates within protein modification; protein ubiquitination. Probable core component of cullin-based SCF-like E3 ubiquitin-protein ligase complexes which mediate the ubiquitination and subsequent proteasomal degradation of target proteins. The E3 ubiquitin-protein ligase activity of the complex is dependent on the neddylation of the cullin subunit. In Dictyostelium discoideum (Social amoeba), this protein is Cullin-3 (culC).